Consider the following 161-residue polypeptide: 6,7-dimethyl-8-ribityllumazine synthase (161 aa).

Residues Trp31, 63 to 65 (SFE), and 85 to 87 (VVI) each bind 5-amino-6-(D-ribitylamino)uracil. 90 to 91 (GT) serves as a coordination point for (2S)-2-hydroxy-3-oxobutyl phosphate. Catalysis depends on His93, which acts as the Proton donor. Phe118 serves as a coordination point for 5-amino-6-(D-ribitylamino)uracil. Arg132 is a (2S)-2-hydroxy-3-oxobutyl phosphate binding site.

It belongs to the DMRL synthase family.

The catalysed reaction is (2S)-2-hydroxy-3-oxobutyl phosphate + 5-amino-6-(D-ribitylamino)uracil = 6,7-dimethyl-8-(1-D-ribityl)lumazine + phosphate + 2 H2O + H(+). The protein operates within cofactor biosynthesis; riboflavin biosynthesis; riboflavin from 2-hydroxy-3-oxobutyl phosphate and 5-amino-6-(D-ribitylamino)uracil: step 1/2. In terms of biological role, catalyzes the formation of 6,7-dimethyl-8-ribityllumazine by condensation of 5-amino-6-(D-ribitylamino)uracil with 3,4-dihydroxy-2-butanone 4-phosphate. This is the penultimate step in the biosynthesis of riboflavin. The protein is 6,7-dimethyl-8-ribityllumazine synthase of Paenarthrobacter aurescens (strain TC1).